The chain runs to 496 residues: tRNA-2-methylthio-N(6)-dimethylallyladenosine synthase (496 aa).

In terms of domain architecture, MTTase N-terminal spans Arg-10–Val-126. [4Fe-4S] cluster-binding residues include Cys-19, Cys-55, Cys-89, Cys-163, Cys-167, and Cys-170. One can recognise a Radical SAM core domain in the interval Arg-149–Glu-380. Positions Lys-382–Val-451 constitute a TRAM domain. The tract at residues Ala-465–Arg-496 is disordered. The span at Ala-487–Arg-496 shows a compositional bias: pro residues.

Belongs to the methylthiotransferase family. MiaB subfamily. Monomer. [4Fe-4S] cluster is required as a cofactor.

Its subcellular location is the cytoplasm. It catalyses the reaction N(6)-dimethylallyladenosine(37) in tRNA + (sulfur carrier)-SH + AH2 + 2 S-adenosyl-L-methionine = 2-methylsulfanyl-N(6)-dimethylallyladenosine(37) in tRNA + (sulfur carrier)-H + 5'-deoxyadenosine + L-methionine + A + S-adenosyl-L-homocysteine + 2 H(+). Catalyzes the methylthiolation of N6-(dimethylallyl)adenosine (i(6)A), leading to the formation of 2-methylthio-N6-(dimethylallyl)adenosine (ms(2)i(6)A) at position 37 in tRNAs that read codons beginning with uridine. This chain is tRNA-2-methylthio-N(6)-dimethylallyladenosine synthase, found in Nocardioides sp. (strain ATCC BAA-499 / JS614).